We begin with the raw amino-acid sequence, 63 residues long: MRCLAFLVVTLLLFTATATTGASNGMNAAASGEAPDSISLAVRDDCCPDPACRQNHPELCSTR.

An N-terminal signal peptide occupies residues 1 to 21 (MRCLAFLVVTLLLFTATATTG). The propeptide occupies 22–43 (ASNGMNAAASGEAPDSISLAVR). Intrachain disulfides connect cysteine 46–cysteine 52 and cysteine 47–cysteine 60. Residues 48-50 (PDP) are lacks the Ser-Xaa-Pro motif that is crucial for potent interaction with nAChR.

Belongs to the conotoxin A superfamily. In terms of tissue distribution, expressed by the salivary gland.

The protein localises to the secreted. Its function is as follows. Alpha-conopeptides-like may act on postsynaptic membranes, they bind to the nicotinic acetylcholine receptors (nAChR) and thus inhibit them. Has possibly a distinct nAChR binding mode from other alpha-conotoxins, due to a different three residue motif (lacks the Ser-Xaa-Pro motif). The polypeptide is Alpha-conotoxin-like PuSG1.1 (Conus pulicarius (Flea-bitten cone)).